The chain runs to 1075 residues: Protein EXPORTIN 1A (1075 aa).

In terms of domain architecture, Importin N-terminal spans 37–103 (ADQILRDLQA…KNYISEVIVQ (67 aa)). 12 HEAT repeats span residues 91–130 (DGMK…QIVK), 135–171 (AKWT…EVFD), 232–267 (IFES…LNFG), 336–373 (SLLL…ELFD), 388–425 (MGLQ…LMIN), 474–513 (DTEK…SMAE), 563–600 (KFLK…KCKR), 612–649 (PFVS…AESD), 682–719 (LKDQ…IFLD), 756–793 (RETL…DYAR), 798–835 (ARES…CTLE), and 894–934 (ETGL…VLTD).

It belongs to the exportin family. Interacts with RAN1. In terms of tissue distribution, expressed ubiquitously, with higher levels in stems, inflorescences and roots. Present in mature pollen grains, unpollinated pistils, and 2-week-old seedlings.

It localises to the nucleus. It is found in the nuclear pore complex. Its subcellular location is the nucleus membrane. In terms of biological role, receptor for the leucine-rich nuclear export signal (NES). Binds cooperatively to the NES on its target protein and to the small GTPase Ran in its active GTP-bound form. Required for the maternal-to-embryonic transition and during gametophyte development. Involved in heat-induced oxidative stress basal resistance. The chain is Protein EXPORTIN 1A from Arabidopsis thaliana (Mouse-ear cress).